Consider the following 866-residue polypeptide: Transcription factor E2F8 (866 aa).

A phosphoserine mark is found at serine 71 and serine 102. 2 DNA-binding regions span residues 113 to 182 (RKEK…TWHG) and 261 to 347 (RKDK…KWTG). Disordered stretches follow at residues 409–429 (RKIN…STQN), 532–632 (TITP…STTL), and 794–837 (TNGQ…GSPC). 2 positions are modified to phosphoserine: serine 413 and serine 417. Residues 543-552 (VCPTTSSNAM) show a composition bias toward polar residues. Composition is skewed to basic and acidic residues over residues 588–603 (QGAK…EKGS) and 612–624 (SGSK…DQKA). Residues 794–805 (TNGQSFAGTGAQ) are compositionally biased toward polar residues. Positions 825–834 (TPGGPTKPTG) are enriched in low complexity.

It belongs to the E2F/DP family. As to quaternary structure, homodimer and heterodimer: mainly forms homodimers and, to a lesser extent, heterodimers with E2F8. Dimerization is important for DNA-binding. Interacts with HIF1A.

The protein resides in the nucleus. Atypical E2F transcription factor that participates in various processes such as angiogenesis and polyploidization of specialized cells. Mainly acts as a transcription repressor that binds DNA independently of DP proteins and specifically recognizes the E2 recognition site 5'-TTTC[CG]CGC-3'. Directly represses transcription of classical E2F transcription factors such as E2F1: component of a feedback loop in S phase by repressing the expression of E2F1, thereby preventing p53/TP53-dependent apoptosis. Plays a key role in polyploidization of cells in placenta and liver by regulating the endocycle, probably by repressing genes promoting cytokinesis and antagonizing action of classical E2F proteins (E2F1, E2F2 and/or E2F3). Required for placental development by promoting polyploidization of trophoblast giant cells. Acts as a promoter of sprouting angiogenesis, possibly by acting as a transcription activator: associates with HIF1A, recognizes and binds the VEGFA promoter, which is different from canonical E2 recognition site, and activates expression of the VEGFA gene. In Bos taurus (Bovine), this protein is Transcription factor E2F8 (E2F8).